The sequence spans 114 residues: Fumarate reductase subunit D (114 aa).

3 helical membrane passes run 27-47 (ICFP…LIPM), 50-70 (IIVF…TIFP), and 94-114 (WLFY…VIAL).

It belongs to the FrdD family. As to quaternary structure, part of an enzyme complex containing four subunits: a flavoprotein (FrdA), an iron-sulfur protein (FrdB), and two hydrophobic anchor proteins (FrdC and FrdD).

It is found in the cell inner membrane. Its function is as follows. Anchors the catalytic components of the fumarate reductase complex to the cell membrane, binds quinones. The sequence is that of Fumarate reductase subunit D from Haemophilus ducreyi (strain 35000HP / ATCC 700724).